Reading from the N-terminus, the 338-residue chain is DNA-directed RNA polymerase subunit alpha (338 aa).

An alpha N-terminal domain (alpha-NTD) region spans residues 1–233 (MYKNWRELIK…EQLQIFINFD (233 aa)). The alpha C-terminal domain (alpha-CTD) stretch occupies residues 250 to 338 (INENLYRSVE…KMIQEGKEDL (89 aa)).

This sequence belongs to the RNA polymerase alpha chain family. Homodimer. The RNAP catalytic core consists of 2 alpha, 1 beta, 1 beta' and 1 omega subunit. When a sigma factor is associated with the core the holoenzyme is formed, which can initiate transcription.

It carries out the reaction RNA(n) + a ribonucleoside 5'-triphosphate = RNA(n+1) + diphosphate. Its function is as follows. DNA-dependent RNA polymerase catalyzes the transcription of DNA into RNA using the four ribonucleoside triphosphates as substrates. This is DNA-directed RNA polymerase subunit alpha from Syntrophotalea carbinolica (strain DSM 2380 / NBRC 103641 / GraBd1) (Pelobacter carbinolicus).